The chain runs to 206 residues: Urease accessory protein UreG (206 aa).

14–21 (GPVGSGKT) contacts GTP.

It belongs to the SIMIBI class G3E GTPase family. UreG subfamily. As to quaternary structure, homodimer. UreD, UreF and UreG form a complex that acts as a GTP-hydrolysis-dependent molecular chaperone, activating the urease apoprotein by helping to assemble the nickel containing metallocenter of UreC. The UreE protein probably delivers the nickel.

The protein localises to the cytoplasm. In terms of biological role, facilitates the functional incorporation of the urease nickel metallocenter. This process requires GTP hydrolysis, probably effectuated by UreG. The polypeptide is Urease accessory protein UreG (Methylocella silvestris (strain DSM 15510 / CIP 108128 / LMG 27833 / NCIMB 13906 / BL2)).